The chain runs to 133 residues: Small ribosomal subunit protein uS8 (133 aa).

The disordered stretch occupies residues M1–A29. Over residues N16 to T25 the composition is skewed to basic and acidic residues.

The protein belongs to the universal ribosomal protein uS8 family. Part of the 30S ribosomal subunit. Contacts proteins S5 and S12.

One of the primary rRNA binding proteins, it binds directly to 16S rRNA central domain where it helps coordinate assembly of the platform of the 30S subunit. The protein is Small ribosomal subunit protein uS8 of Prochlorococcus marinus (strain MIT 9211).